The sequence spans 1081 residues: MPKRTDIKTILIIGAGPIIIGQACEFDYSGAQACKALREEGFKVVLVNSNPATIMTDPSTADVTYIEPITWEVVERIIAKERPDAILPTMGGQTALNCALDLHRHGVLEKYNVELIGASPEAIDKAEDRQKFKEAMTKIGLGSAKSGIAHSLEEALAVQAQIARETSSGGYPIVIRPSFTLGGTGGGIAYNREEFEDICKRGLDLSPTNELLIEESLLGWKEYEMEVVRDKKDNCIIVCSIENLDPMGIHTGDSITVAPAQTLTDKEYQILRNASLAVLREIGVDTGGSNVQFSINPEDGRMIVIEMNPRVSRSSALASKATGFPIAKVAAKLAVGYTLDELKNEITGGATPASFEPSIDYVVTKVPRFAFEKFPQADSHLTTQMKSVGEVMAMGRTFQESFQKALRGLEVGVDGLDEKSSDRDEIIAEIGEPGPDRIWYLGDAFRLGLSIDEVYAETAVDPWFLAQIEDIVRTEALVKARTLDSLSAAELRLLKQKGFSDRRLATLMKTTAQAVREKRIAEKVRPVYKRVDTCAAEFATNTAYLYSTYEAEHGECEADPTERKKIMVLGGGPNRIGQGIEFDYCCVHAALALREDGYETIMVNCNPETVSTDYDTSDRLYFEPVTLEDVLEIVDKEKPVGVIVQYGGQTPLKLALDLEANGVPIIGTTPDMIDAAEDRERFQKLLHDLGLRQPPNRTARAEDEALKLADEIGYPLVVRPSYVLGGRAMEIVHEPRDLERYMREAVKVSNDSPVLLDRFLNDAIECDVDCLSDGKRVFIGGVMEHIEQAGVHSGDSACSLPPYSLSQATVDELKRQTAAMARALNVIGLMNVQFAIQQKGGEDIVYVLEVNPRASRTVPYVSKATGISLAKVAARCMAGQSLDEQGIHDEVVPSYYSVKEAVFPFNKFPGVDPVLGPEMRSTGEVMGVGRTFGEALFKSQLAAGSRLPEKGTVLMTVKDSDKPRAIEVARTLHTLGYPIVATRGTASAIEAAGIPVRVVNKVKDGRPHIVDMIKNGELALVFTTVDETRAAIADSRSIRTAALANRVTYYTTIAGARAAVEGLKHLQNLDVYDLQGLHASL.

Residues 1-410 (MPKRTDIKTI…SFQKALRGLE (410 aa)) are carboxyphosphate synthetic domain. Residues Arg129, Arg176, Gly182, Gly183, Glu215, Leu217, Glu222, Gly248, Ile249, His250, Gln292, and Glu306 each contribute to the ATP site. An ATP-grasp 1 domain is found at 133–335 (KEAMTKIGLG…IAKVAAKLAV (203 aa)). The Mg(2+) site is built by Gln292, Glu306, and Asn308. 3 residues coordinate Mn(2+): Gln292, Glu306, and Asn308. The segment at 411 to 558 (VGVDGLDEKS…YEAEHGECEA (148 aa)) is oligomerization domain. The carbamoyl phosphate synthetic domain stretch occupies residues 559–944 (DPTERKKIMV…ALFKSQLAAG (386 aa)). The ATP-grasp 2 domain maps to 683-878 (QKLLHDLGLR…LAKVAARCMA (196 aa)). ATP contacts are provided by Arg719, Arg758, Leu760, Glu765, Gly790, Val791, His792, Ser793, Gln833, and Glu849. Mg(2+)-binding residues include Gln833, Glu849, and Asn851. Mn(2+) is bound by residues Gln833, Glu849, and Asn851. Residues 945–1081 (SRLPEKGTVL…YDLQGLHASL (137 aa)) enclose the MGS-like domain. An allosteric domain region spans residues 945–1081 (SRLPEKGTVL…YDLQGLHASL (137 aa)).

The protein belongs to the CarB family. As to quaternary structure, composed of two chains; the small (or glutamine) chain promotes the hydrolysis of glutamine to ammonia, which is used by the large (or ammonia) chain to synthesize carbamoyl phosphate. Tetramer of heterodimers (alpha,beta)4. Requires Mg(2+) as cofactor. The cofactor is Mn(2+).

The enzyme catalyses hydrogencarbonate + L-glutamine + 2 ATP + H2O = carbamoyl phosphate + L-glutamate + 2 ADP + phosphate + 2 H(+). It carries out the reaction hydrogencarbonate + NH4(+) + 2 ATP = carbamoyl phosphate + 2 ADP + phosphate + 2 H(+). Its pathway is amino-acid biosynthesis; L-arginine biosynthesis; carbamoyl phosphate from bicarbonate: step 1/1. It functions in the pathway pyrimidine metabolism; UMP biosynthesis via de novo pathway; (S)-dihydroorotate from bicarbonate: step 1/3. Functionally, large subunit of the glutamine-dependent carbamoyl phosphate synthetase (CPSase). CPSase catalyzes the formation of carbamoyl phosphate from the ammonia moiety of glutamine, carbonate, and phosphate donated by ATP, constituting the first step of 2 biosynthetic pathways, one leading to arginine and/or urea and the other to pyrimidine nucleotides. The large subunit (synthetase) binds the substrates ammonia (free or transferred from glutamine from the small subunit), hydrogencarbonate and ATP and carries out an ATP-coupled ligase reaction, activating hydrogencarbonate by forming carboxy phosphate which reacts with ammonia to form carbamoyl phosphate. The chain is Carbamoyl phosphate synthase large chain from Ralstonia nicotianae (strain ATCC BAA-1114 / GMI1000) (Ralstonia solanacearum).